The following is a 501-amino-acid chain: DELTA-alicitoxin-Pse2a (501 aa).

Positions 1–22 are cleaved as a signal peptide; that stretch reads MSPYFKLSSALIFLAITMEALC. A propeptide spanning residues 23-35 is cleaved from the precursor; sequence SPIENTSTSNKDN. Residues 23–359 enclose the MACPF domain; that stretch reads SPIENTSTSN…GFLHFGCSYL (337 aa). Residues 135-159 adopt a coiled-coil conformation; the sequence is AAVTNNIASSEEEVQGLSLNLKAYS. The region spanning 388 to 422 is the EGF-like domain; that stretch reads VCKVGPEGCQHHEDCHYRAAFWCECGGPYDLARTC. Intrachain disulfides connect Cys389-Cys402, Cys396-Cys410, and Cys412-Cys422.

Its subcellular location is the secreted. The protein resides in the nematocyst. Its function is as follows. Causes lethal toxicity to the shrimp Palaemon paucidence, and hemolytic activity toward sheep red blood cells. The sequence is that of DELTA-alicitoxin-Pse2a from Phyllodiscus semoni (Night anemone).